The chain runs to 200 residues: Recombination protein RecR (200 aa).

The C4-type zinc-finger motif lies at 59-74 (CEKCNTFTEAQICEVC). Positions 82–177 (ALLCVVETPA…AVTRLARGVP (96 aa)) constitute a Toprim domain.

It belongs to the RecR family.

May play a role in DNA repair. It seems to be involved in an RecBC-independent recombinational process of DNA repair. It may act with RecF and RecO. In Burkholderia mallei (strain NCTC 10247), this protein is Recombination protein RecR.